A 220-amino-acid polypeptide reads, in one-letter code: Artemin (220 aa).

The first 39 residues, 1–39 (MELGLGGLSTLSHCPWPRQQPALWPTLAALALLSSVAEA), serve as a signal peptide directing secretion. Residues 40–107 (SLGSAPRSPA…ALPRGGRAAR (68 aa)) constitute a propeptide that is removed on maturation. The segment at 41–121 (LGSAPRSPAP…GSRARAAGAR (81 aa)) is disordered. Composition is skewed to pro residues over residues 47–58 (SPAPREGPPPVL) and 81–98 (PPPQ…PPSA). Residues 99-121 (LPRGGRAARAGGPGSRARAAGAR) are compositionally biased toward low complexity. 3 cysteine pairs are disulfide-bonded: Cys-123/Cys-188, Cys-150/Cys-216, and Cys-154/Cys-218. N-linked (GlcNAc...) asparagine glycosylation is present at Asn-202.

Belongs to the TGF-beta family. GDNF subfamily. In terms of assembly, homodimer; disulfide-linked. Interacts with GFRA3 coreceptor and RET: forms a 2:2:2 ternary complex composed of ARTN ligand, GFRA3 and RET receptor. Ubiquitous. Expressed at high levels in peripheral tissues including prostate, placenta, pancreas, heart, kidney, pituitary gland, lung and testis. Expressed at low levels in the brain.

The protein localises to the secreted. Its function is as follows. Growth factor that supports the survival of sensory and sympathetic peripheral neurons in culture and also supports the survival of dopaminergic neurons of the ventral mid-brain. Acts by binding to its coreceptor, GFRA3, leading to autophosphorylation and activation of the RET receptor. Strong attractant of gut hematopoietic cells thus promoting the formation Peyer's patch-like structures, a major component of the gut-associated lymphoid tissue. This is Artemin from Homo sapiens (Human).